Here is a 342-residue protein sequence, read N- to C-terminus: C-X-C chemokine receptor type 6 (342 aa).

Over 1–32 the chain is Extracellular; it reads MAEYDHYEDNGFNSFNDSSQEEHQDFLQFSKV. An N-linked (GlcNAc...) asparagine glycan is attached at Asn16. A helical transmembrane segment spans residues 33-59; sequence FLPCMYLVVFVCGLVGNSLVLVISIFY. Residues 60-68 are Cytoplasmic-facing; it reads HKLQSLTDV. Residues 69–89 form a helical membrane-spanning segment; it reads FLVNLPLADLVFVCTLPFWAY. Topologically, residues 90 to 103 are extracellular; it reads AGIHEWIFGQVMCK. A disulfide bridge connects residues Cys102 and Cys180. Residues 104–125 traverse the membrane as a helical segment; sequence TLLGIYTINFYTSMLILTCITV. Residues 126–143 lie on the Cytoplasmic side of the membrane; that stretch reads DRFIVVVKATKAYNQQAK. Residues 144-164 traverse the membrane as a helical segment; sequence KMTWGKVICLLIWVISLLVSL. Residues 165–187 lie on the Extracellular side of the membrane; that stretch reads PQIIYGNVFNLDKLICGYHDEEI. The chain crosses the membrane as a helical span at residues 188 to 215; it reads STVVLATQMTLGFFLPLLAMIVCYSVII. The Cytoplasmic segment spans residues 216-231; it reads KTLLHAGGFQKHRSLK. A helical transmembrane segment spans residues 232–259; sequence IIFLVMAVFLLTQTPFNLVKLIRSTHWE. Residues 260–275 are Extracellular-facing; sequence YYAMTSFHYTIIVTEA. The helical transmembrane segment at 276-293 threads the bilayer; it reads IAYLRACLNPVLYAFVSL. The Cytoplasmic portion of the chain corresponds to 294-342; that stretch reads KFRKNFWKLVKDIGCLPYLGVSHQWKSSEDNSKTFSASHNVEATSMFQL.

Belongs to the G-protein coupled receptor 1 family.

Its subcellular location is the cell membrane. Receptor for the C-X-C chemokine CXCL16. Used as a coreceptor by SIVs and by strains of HIV-2 and m-tropic HIV-1. This is C-X-C chemokine receptor type 6 (CXCR6) from Chlorocebus aethiops (Green monkey).